The following is a 478-amino-acid chain: Glycogen synthase (478 aa).

K15 contacts ADP-alpha-D-glucose.

It belongs to the glycosyltransferase 1 family. Bacterial/plant glycogen synthase subfamily.

The enzyme catalyses [(1-&gt;4)-alpha-D-glucosyl](n) + ADP-alpha-D-glucose = [(1-&gt;4)-alpha-D-glucosyl](n+1) + ADP + H(+). Its pathway is glycan biosynthesis; glycogen biosynthesis. Synthesizes alpha-1,4-glucan chains using ADP-glucose. The polypeptide is Glycogen synthase (Caldicellulosiruptor bescii (strain ATCC BAA-1888 / DSM 6725 / KCTC 15123 / Z-1320) (Anaerocellum thermophilum)).